Consider the following 500-residue polypeptide: Beta-xylosidase (500 aa).

Glu160 (proton donor) is an active-site residue. The active-site Nucleophile is Glu277.

The protein belongs to the glycosyl hydrolase 39 family.

It catalyses the reaction Hydrolysis of (1-&gt;4)-beta-D-xylans, to remove successive D-xylose residues from the non-reducing termini.. This is Beta-xylosidase (xynB) from Thermoanaerobacterium saccharolyticum (strain DSM 8691 / JW/SL-YS485).